The chain runs to 424 residues: Tol-Pal system protein TolB (424 aa).

An N-terminal signal peptide occupies residues 1-24 (MNKARAIARWISFLLLIAAGQVCA).

This sequence belongs to the TolB family. As to quaternary structure, the Tol-Pal system is composed of five core proteins: the inner membrane proteins TolA, TolQ and TolR, the periplasmic protein TolB and the outer membrane protein Pal. They form a network linking the inner and outer membranes and the peptidoglycan layer.

It is found in the periplasm. Its function is as follows. Part of the Tol-Pal system, which plays a role in outer membrane invagination during cell division and is important for maintaining outer membrane integrity. The chain is Tol-Pal system protein TolB from Methylococcus capsulatus (strain ATCC 33009 / NCIMB 11132 / Bath).